A 206-amino-acid polypeptide reads, in one-letter code: uncharacterized protein (206 aa).

2 disordered regions span residues Asn-64–Leu-123 and Val-155–Gly-206. The segment covering Glu-66–Leu-79 has biased composition (polar residues). Positions Ala-97–Glu-107 are enriched in low complexity. A compositionally biased stretch (basic and acidic residues) spans Asn-108–Ser-118. Over residues Val-155–Thr-167 the composition is skewed to low complexity. Residues Gly-182–Asn-198 are compositionally biased toward polar residues.

This is an uncharacterized protein from Haemophilus influenzae (strain ATCC 51907 / DSM 11121 / KW20 / Rd).